Here is a 445-residue protein sequence, read N- to C-terminus: Endoplasmic reticulum membrane adapter protein XK (445 aa).

Residues 1–2 (MK) lie on the Cytoplasmic side of the membrane. A helical transmembrane segment spans residues 3–23 (FPASVLASVFLFVAETMAALY). The Extracellular portion of the chain corresponds to 24–37 (LSSTYRSAGDRMWQ). A helical membrane pass occupies residues 38-58 (ALTLFFSLMPCTLVQLTLLFV). The Cytoplasmic segment spans residues 59 to 68 (HRDLSRDRPL). The chain crosses the membrane as a helical span at residues 69 to 89 (VLLMHLLQLGPLYRCCEVFCI). Residues 90 to 140 (YCQSDQNEEPYVSITKKRQMPKDGLSEEVEKEVGQSEGKLFTHRSAFSRAS) lie on the Extracellular side of the membrane. Position 115 is a phosphoserine (Ser-115). A helical membrane pass occupies residues 141-161 (VIQAFLGSAPQLTLQLYITVL). Over 162–170 (EQNITTGRF) the chain is Cytoplasmic. The chain crosses the membrane as a helical span at residues 171 to 191 (IMVLSLLSIVYGALRCNILAI). At 192 to 207 (KIKYDEYEVKVKPLAY) the chain is on the extracellular side. Residues 208-228 (VCIFLWRSFEIATRVIVLVLF) form a helical membrane-spanning segment. Residues 229–234 (TSVLKI) are Cytoplasmic-facing. The helical transmembrane segment at 235–255 (WVVVVILVNFFSFFLYPWILF) threads the bilayer. Residues 256–276 (WNSGSPFPENIEKALTRVGTT) are Extracellular-facing. A helical membrane pass occupies residues 277-297 (IVLGFLTLLYAGINMFCWSAV). At 298–316 (QLKIDNPELISKSQNWYRL) the chain is on the cytoplasmic side. A helical membrane pass occupies residues 317–337 (LIYYMMRFVENSVLLLLWFFF). At 338–348 (KTDIYMYVCAP) the chain is on the extracellular side. The helical transmembrane segment at 349–369 (LLILQLLIGYCTSILFMLVFY) threads the bilayer. Over 370–445 (QFFHPCKKLF…IWTAVDLCST (76 aa)) the chain is Cytoplasmic.

Belongs to the XK family. In terms of assembly, heterodimer with Kell; disulfide-linked. Interacts with VPS13A.

Its subcellular location is the endoplasmic reticulum membrane. Functionally, recruits the lipid transfer protein VPS13A from lipid droplets to the endoplasmic reticulum (ER) membrane. The polypeptide is Endoplasmic reticulum membrane adapter protein XK (Rattus norvegicus (Rat)).